The sequence spans 840 residues: Aconitase AMT8 (840 aa).

Residue 258-260 participates in substrate binding; that stretch reads DSH. Residues C450, C513, and C516 each contribute to the [4Fe-4S] cluster site. Residues R536, R541, and 709-710 contribute to the substrate site; that span reads SR.

This sequence belongs to the aconitase/IPM isomerase family.

It functions in the pathway mycotoxin biosynthesis. Functionally, aconitase; part of the gene clusters that mediate the biosynthesis of AM-toxins, host-selective toxins (HSTs) causing Alternaria blotch on apple, a worldwide distributed disease. AM-toxins are cyclic depsipeptides containing the 3 residues 2-hydroxy-isovaleric acid (2-HIV), dehydroalanine, L-alanine which are common for all 3 AM-toxins I to III. The fourth precursor is L-alpha-amino-methoxyphenyl-valeric acid (L-Amv) for AM-toxin I, L-alpha-amino-phenyl-valeric acid (L-Apv) for AM-toxin II, and L-alpha-amino-hydroxyphenyl-valeric acid (L-Ahv) for AM-toxin III. AM-toxins have two target sites for affecting susceptible apple cells; they cause invagination of the plasma membrane and electrolyte loss and chloroplast disorganization. The non-ribosomal peptide synthetase AMT1 contains 4 catalytic modules and is responsible for activation of each residue in AM-toxin. The aldo-keto reductase AMT2 catalyzes the conversion of 2-keto-isovaleric acid (2-KIV) to 2-hydroxy-isovaleric acid (2-HIV), one of the precursor residues incorporated by AMT1 during AM-toxin biosynthesis, by reduction of its ketone to an alcohol. The cytochrome P450 monooxygenase AMT3 and the thioesterase AMT4 are also important for AM-toxin production, but their exact function within the AM-toxin biosynthesis are not known yet. Up to 21 proteins (including AMT1 to AMT4) are predicted to be involved in AM-toxin biosynthesis since their expression ishighly up-regulated in AM-toxin-producing cultures. This chain is Aconitase AMT8, found in Alternaria alternata (Alternaria rot fungus).